The following is a 283-amino-acid chain: 4-diphosphocytidyl-2-C-methyl-D-erythritol kinase (283 aa).

Lysine 12 is a catalytic residue. 99–109 (PLAAGIGGGSA) provides a ligand contact to ATP. Aspartate 141 is a catalytic residue.

It belongs to the GHMP kinase family. IspE subfamily.

It carries out the reaction 4-CDP-2-C-methyl-D-erythritol + ATP = 4-CDP-2-C-methyl-D-erythritol 2-phosphate + ADP + H(+). It functions in the pathway isoprenoid biosynthesis; isopentenyl diphosphate biosynthesis via DXP pathway; isopentenyl diphosphate from 1-deoxy-D-xylulose 5-phosphate: step 3/6. Catalyzes the phosphorylation of the position 2 hydroxy group of 4-diphosphocytidyl-2C-methyl-D-erythritol. The polypeptide is 4-diphosphocytidyl-2-C-methyl-D-erythritol kinase (Sphingopyxis alaskensis (strain DSM 13593 / LMG 18877 / RB2256) (Sphingomonas alaskensis)).